Consider the following 487-residue polypeptide: Probable Xaa-Pro aminopeptidase MGYG_06974 (487 aa).

Residues Asp255, Asp266, Glu414, and Glu458 each contribute to the Mn(2+) site.

This sequence belongs to the peptidase M24B family. The cofactor is Mn(2+).

The catalysed reaction is Release of any N-terminal amino acid, including proline, that is linked to proline, even from a dipeptide or tripeptide.. Catalyzes the removal of a penultimate prolyl residue from the N-termini of peptides. The sequence is that of Probable Xaa-Pro aminopeptidase MGYG_06974 from Arthroderma gypseum (strain ATCC MYA-4604 / CBS 118893) (Microsporum gypseum).